A 317-amino-acid polypeptide reads, in one-letter code: Transaldolase (317 aa).

K132 (schiff-base intermediate with substrate) is an active-site residue.

The protein belongs to the transaldolase family. Type 1 subfamily. As to quaternary structure, homodimer.

It is found in the cytoplasm. It carries out the reaction D-sedoheptulose 7-phosphate + D-glyceraldehyde 3-phosphate = D-erythrose 4-phosphate + beta-D-fructose 6-phosphate. Its pathway is carbohydrate degradation; pentose phosphate pathway; D-glyceraldehyde 3-phosphate and beta-D-fructose 6-phosphate from D-ribose 5-phosphate and D-xylulose 5-phosphate (non-oxidative stage): step 2/3. Its function is as follows. Transaldolase is important for the balance of metabolites in the pentose-phosphate pathway. This is Transaldolase from Haemophilus influenzae (strain 86-028NP).